Here is a 413-residue protein sequence, read N- to C-terminus: Phosphatidylcholine:ceramide cholinephosphotransferase 1 (413 aa).

In terms of domain architecture, SAM spans 7–70; it reads WSPKKVADWL…LDMIETLKME (64 aa). S8 carries the phosphoserine modification. A run of 5 helical transmembrane segments spans residues 136 to 156, 184 to 204, 215 to 235, 276 to 296, and 304 to 324; these read FLAFLYALSCFVLTTVMISVV, FSICEINGMILVGLWLIQWLL, FFCIVGTLYLYRCITMYVTTL, MCGDYLYSGHTVMLTLTYLFI, and LWWYHWICWLLSVVGIFCILL. Residue H285 is part of the active site. Residues 325–413 are Cytoplasmic-facing; it reads AHDHYTVDVV…VKYSRLVNDT (89 aa). Catalysis depends on residues H328 and D332.

The protein belongs to the sphingomyelin synthase family. Brain, heart, kidney, liver, muscle and stomach.

The protein resides in the golgi apparatus membrane. It carries out the reaction an N-acylsphing-4-enine + a 1,2-diacyl-sn-glycero-3-phosphocholine = a sphingomyelin + a 1,2-diacyl-sn-glycerol. The catalysed reaction is an N-acylsphinganine + a 1,2-diacyl-sn-glycero-3-phosphocholine = an N-acylsphinganine-1-phosphocholine + a 1,2-diacyl-sn-glycerol. It catalyses the reaction an N-acyl-(4R)-4-hydroxysphinganine + a 1,2-diacyl-sn-glycero-3-phosphocholine = an N-acyl-(4R)-4-hydroxysphinganine-phosphocholine + a 1,2-diacyl-sn-glycerol. The enzyme catalyses 1-(9Z-octadecenoyl)-2-acyl-sn-3-glycerol + a sphingomyelin = a 1-(9Z-octadecenoyl)-2-acyl-sn-glycero-3-phosphocholine + an N-acylsphing-4-enine. It carries out the reaction N-hexadecanoylsphinganine + a 1,2-diacyl-sn-glycero-3-phosphocholine = N-hexadecanoyl-sphinganine-1-phosphocholine + a 1,2-diacyl-sn-glycerol. The catalysed reaction is N-hexadecanoyl-(4R)-hydroxysphinganine + a 1,2-diacyl-sn-glycero-3-phosphocholine = N-hexadecanoyl-(4R)-hydroxysphinganine-phosphocholine + a 1,2-diacyl-sn-glycerol. It catalyses the reaction an N-acylsphing-4-enine + a 1,2-diacyl-sn-glycero-3-phosphoethanolamine = an N-acylsphing-4-enine 1-phosphoethanolamine + a 1,2-diacyl-sn-glycerol. It participates in sphingolipid metabolism. Inhibited by bacterial PC-phospholipase C inhibitor D609. In terms of biological role, major sphingomyelin synthase at the Golgi apparatus. Catalyzes the reversible transfer of phosphocholine moiety in sphingomyelin biosynthesis: in the forward reaction transfers phosphocholine head group of phosphatidylcholine (PC) on to ceramide (CER) to form ceramide phosphocholine (sphingomyelin, SM) and diacylglycerol (DAG) as by-product, and in the reverse reaction transfers phosphocholine from SM to DAG to form PC and CER. The direction of the reaction depends on the levels of CER and DAG in Golgi membranes. Converts the newly synthesized CER, that is transported from the endoplasmic reticulum to the trans-Golgi by the Cer transport protein (CERT), to SM. Can form a heteromeric complex with glucosylceramide synthase (GCS) increasing SMS activity and reducing glucosylceramide synthesis, a critical mechanism that controls the metabolic fate of CER in the Golgi. Does not use free phosphorylcholine or CDP-choline as donor. Can also transfer phosphoethanolamine head group of phosphatidylethanolamine (PE) on to CER to form ceramide phosphoethanolamine (CPE). Regulates receptor-mediated signal transduction via mitogenic DAG and proapoptotic CER, as well as via SM, a structural component of membrane rafts that serve as platforms for signal transduction and protein sorting. Plays a role in secretory transport via regulation of DAG pool at the Golgi apparatus and its downstream effects on PRKD1. This is Phosphatidylcholine:ceramide cholinephosphotransferase 1 (SGMS1) from Homo sapiens (Human).